We begin with the raw amino-acid sequence, 512 residues long: Reduced folate transporter (512 aa).

Residue methionine 1 is modified to N-acetylmethionine. Residues 1-29 (MVPTGQVAEKQACEEPRQDRELKSWRWLV) are Cytoplasmic-facing. A helical transmembrane segment spans residues 30 to 50 (FYLCFFGFMAQLRPGESFITP). Folate contacts are provided by isoleucine 48 and threonine 49. Topologically, residues 51-62 (YLLERNFTKEQV) are extracellular. Asparagine 56 is a glycosylation site (N-linked (GlcNAc...) asparagine). A helical transmembrane segment spans residues 63-85 (TNEIIPMLPYSHLAVLVPIFLLT). Over 86-89 (DYLR) the chain is Cytoplasmic. The helical transmembrane segment at 90 to 110 (YKPVLVLQCLSFVCVWLLLLL) threads the bilayer. Residues 111–114 (GTSV) are Extracellular-facing. The chain crosses the membrane as a helical span at residues 115-137 (VHMQLMEVFYSITMAARIAYSSY). Glutamate 121 and arginine 131 together coordinate folate. At 138-151 (IFSLVQPSRYQRMA) the chain is on the cytoplasmic side. A helical membrane pass occupies residues 152 to 176 (SYSRAAVLLGVFISSVLGQVLVTLG). Valine 162 lines the folate pocket. Residues 177–181 (GISTY) are Extracellular-facing. Residues 182 to 200 (MLNCISLGFILFSLSLSLF) traverse the membrane as a helical segment. Residues 201 to 266 (LKRPKRSLFF…ELVKNVRQPQ (66 aa)) are Cytoplasmic-facing. A helical transmembrane segment spans residues 267–292 (LRLWCLWWVFNSAGYYLITYYVHVLW). Folate-binding residues include tyrosine 281, tyrosine 282, and tyrosine 286. At 293–300 (KITDSRLN) the chain is on the extracellular side. Residues 301 to 323 (YNGAVDAASTLLSAITAFTAGFV) form a helical membrane-spanning segment. The Cytoplasmic portion of the chain corresponds to 324 to 329 (NIRWAL). Residues 330-350 (WSKLVIASVIAIQAGLVFCMF) traverse the membrane as a helical segment. Residues 351–353 (QIP) are Extracellular-facing. A helical membrane pass occupies residues 354 to 377 (DIWVCYVTFVLFRGAYQFLVPIAT). 2 residues coordinate folate: arginine 366 and glutamine 370. Residues 378-391 (FQIASSLSKELCAL) are Cytoplasmic-facing. The chain crosses the membrane as a helical span at residues 392–415 (VFGINTFLATALKTSITLVVSDKR). Positions 400 to 412 (ATALKTSITLVVS) are required for substrate-binding. Residues 416–423 (GLGLQVHQ) lie on the Extracellular side of the membrane. The helical transmembrane segment at 424-448 (QFRIYFMYFLTLSIICLAWAGLDGL) threads the bilayer. Over 449–512 (RYYRRGRHQP…RADLRVEAKA (64 aa)) the chain is Cytoplasmic. Residues serine 466, serine 471, and serine 476 each carry the phosphoserine modification. Residues 479–512 (DGDLRRPQPSAPQLLPEDGSVEDGRADLRVEAKA) are disordered. Over residues 500-512 (EDGRADLRVEAKA) the composition is skewed to basic and acidic residues.

It belongs to the reduced folate carrier (RFC) transporter (TC 2.A.48) family. Expressed in liver, heart, brain, spleen, lung and skeletal muscle.

The protein localises to the cell membrane. It localises to the apical cell membrane. It is found in the basolateral cell membrane. The enzyme catalyses 5-amino-1-(5-phospho-beta-D-ribosyl)imidazole-4-carboxamide(in) + (6S)-5-methyl-5,6,7,8-tetrahydrofolate(out) = 5-amino-1-(5-phospho-beta-D-ribosyl)imidazole-4-carboxamide(out) + (6S)-5-methyl-5,6,7,8-tetrahydrofolate(in). Its function is as follows. Antiporter that mediates the import of reduced folates, driven by the export of organic anions. Also acts as an importer of immunoreactive cyclic dinucleotides, but with a lower transporter activity. Mechanistically, acts as a secondary active transporter, which exports intracellular organic anions down their concentration gradients to facilitate the uptake of its substrates. Has high affinity for N5-methyltetrahydrofolate, the predominant circulating form of folate. Also mediates the import of antifolate drug methotrexate. 5-amino-4-imidazolecarboxamide riboside (AICAR), when phosphorylated to AICAR monophosphate, can serve as an organic anion for antiporter activity. In Rattus norvegicus (Rat), this protein is Reduced folate transporter.